The primary structure comprises 30 residues: Cycloviolacin-H3 (30 aa).

A cross-link (cyclopeptide (Gly-Asn)) is located at residues 1-30 (GLPVCGETCFGGTCNTPGCICDPWPVCTRN). 3 cysteine pairs are disulfide-bonded: Cys5/Cys19, Cys9/Cys21, and Cys14/Cys27.

Post-translationally, this is a cyclic peptide.

Functionally, probably participates in a plant defense mechanism. This Viola hederacea (Australian violet) protein is Cycloviolacin-H3.